Reading from the N-terminus, the 450-residue chain is tRNA modification GTPase MnmE (450 aa).

Residues Arg23, Glu81, and Lys120 each contribute to the (6S)-5-formyl-5,6,7,8-tetrahydrofolate site. In terms of domain architecture, TrmE-type G spans 216 to 373 (GIHLVLAGKP…LLKKIATLAG (158 aa)). Residues 226–231 (NAGKSS), 245–251 (TPQAGTT), 270–273 (DTAG), and 337–340 (NKAD) each bind GTP. Ser230 and Thr251 together coordinate Mg(2+). Residue Lys450 coordinates (6S)-5-formyl-5,6,7,8-tetrahydrofolate.

It belongs to the TRAFAC class TrmE-Era-EngA-EngB-Septin-like GTPase superfamily. TrmE GTPase family. In terms of assembly, homodimer. Heterotetramer of two MnmE and two MnmG subunits. The cofactor is K(+).

The protein resides in the cytoplasm. Functionally, exhibits a very high intrinsic GTPase hydrolysis rate. Involved in the addition of a carboxymethylaminomethyl (cmnm) group at the wobble position (U34) of certain tRNAs, forming tRNA-cmnm(5)s(2)U34. The chain is tRNA modification GTPase MnmE from Dichelobacter nodosus (strain VCS1703A).